Here is a 199-residue protein sequence, read N- to C-terminus: ORF1/1 protein (199 aa).

The tract at residues 96-155 (ESDALTLSPVHRPKRPKRDTQVKEKTPEKDSDSAVQLRRLQPWIHSSQETKDEEEEIPEG) is disordered. Residues 113-127 (RDTQVKEKTPEKDSD) are compositionally biased toward basic and acidic residues.

The chain is ORF1/1 protein from Torque teno virus (isolate Human/Finland/Hel32/2002) (TTV).